The following is a 101-amino-acid chain: MAEIAVEVVYALPERQALLRLSVPAGTSAREAVLLSGIAEAFPGLDVQGCPLGIFGKLLARPEERVLEAGERVEIYRPLIADPKEVRKQRAARARSEREGG.

Belongs to the UPF0125 (RnfH) family.

The protein is Protein RnfH of Pseudomonas aeruginosa (strain LESB58).